Here is a 761-residue protein sequence, read N- to C-terminus: Phosphoribosylformylglycinamidine synthase subunit PurL (761 aa).

His-49 is a catalytic residue. The ATP site is built by Tyr-52 and Lys-92. Glu-94 serves as a coordination point for Mg(2+). Residues 95–98 (SHNH) and Arg-117 contribute to the substrate site. The active-site Proton acceptor is the His-96. Asp-118 provides a ligand contact to Mg(2+). Gln-241 is a binding site for substrate. A Mg(2+)-binding site is contributed by Asp-269. 318 to 320 (ESQ) is a substrate binding site. ATP contacts are provided by Asn-502 and Gly-539. Position 540 (Asn-540) interacts with Mg(2+). Position 542 (Ser-542) interacts with substrate.

The protein belongs to the FGAMS family. As to quaternary structure, monomer. Part of the FGAM synthase complex composed of 1 PurL, 1 PurQ and 2 PurS subunits.

It is found in the cytoplasm. It carries out the reaction N(2)-formyl-N(1)-(5-phospho-beta-D-ribosyl)glycinamide + L-glutamine + ATP + H2O = 2-formamido-N(1)-(5-O-phospho-beta-D-ribosyl)acetamidine + L-glutamate + ADP + phosphate + H(+). It functions in the pathway purine metabolism; IMP biosynthesis via de novo pathway; 5-amino-1-(5-phospho-D-ribosyl)imidazole from N(2)-formyl-N(1)-(5-phospho-D-ribosyl)glycinamide: step 1/2. Its function is as follows. Part of the phosphoribosylformylglycinamidine synthase complex involved in the purines biosynthetic pathway. Catalyzes the ATP-dependent conversion of formylglycinamide ribonucleotide (FGAR) and glutamine to yield formylglycinamidine ribonucleotide (FGAM) and glutamate. The FGAM synthase complex is composed of three subunits. PurQ produces an ammonia molecule by converting glutamine to glutamate. PurL transfers the ammonia molecule to FGAR to form FGAM in an ATP-dependent manner. PurS interacts with PurQ and PurL and is thought to assist in the transfer of the ammonia molecule from PurQ to PurL. The sequence is that of Phosphoribosylformylglycinamidine synthase subunit PurL from Chlorobium chlorochromatii (strain CaD3).